The primary structure comprises 243 residues: Isoprenyl transferase 2 (243 aa).

Asp23 is a catalytic residue. Asp23 is a Mg(2+) binding site. Residues 24–27, Trp28, Arg36, His40, and 68–70 contribute to the substrate site; these read GNGR and STE. The Proton acceptor role is filled by Asn71. Residues Trp72, Arg74, Arg191, and 197 to 199 each bind substrate; that span reads RTS. Glu210 provides a ligand contact to Mg(2+).

The protein belongs to the UPP synthase family. Homodimer. Mg(2+) is required as a cofactor.

Its function is as follows. Catalyzes the condensation of isopentenyl diphosphate (IPP) with allylic pyrophosphates generating different type of terpenoids. The sequence is that of Isoprenyl transferase 2 from Corynebacterium efficiens (strain DSM 44549 / YS-314 / AJ 12310 / JCM 11189 / NBRC 100395).